The following is a 297-amino-acid chain: Homoserine kinase (297 aa).

82-92 contacts ATP; it reads PVSRGLGSSAA.

The protein belongs to the GHMP kinase family. Homoserine kinase subfamily.

The protein localises to the cytoplasm. It carries out the reaction L-homoserine + ATP = O-phospho-L-homoserine + ADP + H(+). The protein operates within amino-acid biosynthesis; L-threonine biosynthesis; L-threonine from L-aspartate: step 4/5. Its function is as follows. Catalyzes the ATP-dependent phosphorylation of L-homoserine to L-homoserine phosphate. The polypeptide is Homoserine kinase (Clostridium botulinum (strain Okra / Type B1)).